The chain runs to 434 residues: Arginine/serine-rich coiled-coil protein 2 (434 aa).

Residues 1–27 (MAASDTERDGLAPEKTSPDRDKKKEQS) are compositionally biased toward basic and acidic residues. A disordered region spans residues 1-230 (MAASDTERDG…PSPPPFRGRN (230 aa)). Position 2 is an N-acetylalanine (Ala2). Ser4 is subject to Phosphoserine. Phosphothreonine occurs at positions 6 and 16. A phosphoserine mark is found at Ser17, Ser30, and Ser32. A compositionally biased stretch (basic residues) spans 35 to 51 (ASKHHYSRSRSRSRERK). Over residues 66-111 (RSKEGRRHESKDKSSKKHKSEEHNDKEHSSDKGRERLNSSENGEDR) the composition is skewed to basic and acidic residues. Ser104 carries the post-translational modification Phosphoserine. Positions 112–214 (HKRKERKSSR…KRIEKPRRFS (103 aa)) are enriched in basic residues. A coiled-coil region spans residues 230–270 (NTAMDAQEALARRLERAKKLQEQREKEMVEKQKQQEIAAAA). Residue Lys375 forms a Glycyl lysine isopeptide (Lys-Gly) (interchain with G-Cter in SUMO1); alternate linkage. Residue Lys375 forms a Glycyl lysine isopeptide (Lys-Gly) (interchain with G-Cter in SUMO2); alternate linkage. Ser376 carries the post-translational modification Phosphoserine.

The protein belongs to the RSRC2 family.

In Homo sapiens (Human), this protein is Arginine/serine-rich coiled-coil protein 2 (RSRC2).